Here is a 210-residue protein sequence, read N- to C-terminus: Proteasome subunit beta 2 (210 aa).

Positions 1–12 (MSNNVEEKILHG) are cleaved as a propeptide — removed in mature form; by autocatalysis. Residue Thr-13 is the Nucleophile of the active site.

Belongs to the peptidase T1B family. The 20S proteasome core is composed of 14 alpha and 14 beta subunits that assemble into four stacked heptameric rings, resulting in a barrel-shaped structure. The two inner rings, each composed of seven catalytic beta subunits, are sandwiched by two outer rings, each composed of seven alpha subunits. The catalytic chamber with the active sites is on the inside of the barrel. Has a gated structure, the ends of the cylinder being occluded by the N-termini of the alpha-subunits. Is capped at one or both ends by the proteasome regulatory ATPase, PAN.

Its subcellular location is the cytoplasm. The catalysed reaction is Cleavage of peptide bonds with very broad specificity.. Its activity is regulated as follows. The formation of the proteasomal ATPase PAN-20S proteasome complex, via the docking of the C-termini of PAN into the intersubunit pockets in the alpha-rings, triggers opening of the gate for substrate entry. Interconversion between the open-gate and close-gate conformations leads to a dynamic regulation of the 20S proteasome proteolysis activity. Its function is as follows. Component of the proteasome core, a large protease complex with broad specificity involved in protein degradation. In Nitrosopumilus maritimus (strain SCM1), this protein is Proteasome subunit beta 2.